The chain runs to 237 residues: Lipoprotein-releasing system ATP-binding protein LolD (237 aa).

Positions 8 to 236 constitute an ABC transporter domain; the sequence is ISVTDLRKTF…EAIKKSVKTA (229 aa). Residue 40 to 47 participates in ATP binding; sequence GKSGSGKS.

This sequence belongs to the ABC transporter superfamily. Lipoprotein translocase (TC 3.A.1.125) family. The complex is composed of two ATP-binding proteins (LolD) and two transmembrane proteins (LolC and LolE).

It is found in the cell inner membrane. Functionally, part of the ABC transporter complex LolCDE involved in the translocation of mature outer membrane-directed lipoproteins, from the inner membrane to the periplasmic chaperone, LolA. Responsible for the formation of the LolA-lipoprotein complex in an ATP-dependent manner. The polypeptide is Lipoprotein-releasing system ATP-binding protein LolD (Leptospira interrogans serogroup Icterohaemorrhagiae serovar Lai (strain 56601)).